The sequence spans 386 residues: Lipoyl synthase, mitochondrial (386 aa).

[4Fe-4S] cluster-binding residues include Cys110, Cys115, Cys121, Cys141, Cys145, Cys148, and Ser356. One can recognise a Radical SAM core domain in the interval 124-345 (GNDKSKATAT…KEQALEMGFL (222 aa)).

This sequence belongs to the radical SAM superfamily. Lipoyl synthase family. Requires [4Fe-4S] cluster as cofactor.

It localises to the mitochondrion. The catalysed reaction is [[Fe-S] cluster scaffold protein carrying a second [4Fe-4S](2+) cluster] + N(6)-octanoyl-L-lysyl-[protein] + 2 oxidized [2Fe-2S]-[ferredoxin] + 2 S-adenosyl-L-methionine + 4 H(+) = [[Fe-S] cluster scaffold protein] + N(6)-[(R)-dihydrolipoyl]-L-lysyl-[protein] + 4 Fe(3+) + 2 hydrogen sulfide + 2 5'-deoxyadenosine + 2 L-methionine + 2 reduced [2Fe-2S]-[ferredoxin]. It functions in the pathway protein modification; protein lipoylation via endogenous pathway; protein N(6)-(lipoyl)lysine from octanoyl-[acyl-carrier-protein]: step 2/2. Catalyzes the radical-mediated insertion of two sulfur atoms into the C-6 and C-8 positions of the octanoyl moiety bound to the lipoyl domains of lipoate-dependent enzymes, thereby converting the octanoylated domains into lipoylated derivatives. The sequence is that of Lipoyl synthase, mitochondrial from Zygosaccharomyces rouxii (strain ATCC 2623 / CBS 732 / NBRC 1130 / NCYC 568 / NRRL Y-229).